Here is a 247-residue protein sequence, read N- to C-terminus: MVFKKTQPSPSLKNPERIQSFKKLSKKIGIKFSKIEYYNTAFIHSSYKNENPEILEDNERLEFLGDSVLGLVAARSLFQKYPKASEGELSRIKSKIVSTPILNSIAEKLNLGEYLLLGKGEKNSQGKGRRKIAANLFESLVGAIYLDRGFEVAEKFIVQHLLEFAENPDMEESVRDYKTQLQEYSQKHFKTLPVYRMKGESGPDHSKMFQVSVRIRDQWEASGYGASKKIAEQNAAKELYIRIRRGF.

Positions 21–149 (FKKLSKKIGI…LVGAIYLDRG (129 aa)) constitute an RNase III domain. Glutamate 62 contacts Mg(2+). Aspartate 66 is an active-site residue. Mg(2+)-binding residues include asparagine 135 and glutamate 138. Residue glutamate 138 is part of the active site. Residues 176 to 245 (DYKTQLQEYS…AKELYIRIRR (70 aa)) form the DRBM domain.

Belongs to the ribonuclease III family. Homodimer. Mg(2+) serves as cofactor.

It is found in the cytoplasm. It carries out the reaction Endonucleolytic cleavage to 5'-phosphomonoester.. Its function is as follows. Digests double-stranded RNA. Involved in the processing of primary rRNA transcript to yield the immediate precursors to the large and small rRNAs (23S and 16S). Processes some mRNAs, and tRNAs when they are encoded in the rRNA operon. Processes pre-crRNA and tracrRNA of type II CRISPR loci if present in the organism. The sequence is that of Ribonuclease 3 from Leptospira borgpetersenii serovar Hardjo-bovis (strain L550).